Reading from the N-terminus, the 484-residue chain is Fumigaclavine B O-acetyltransferase ifgI (484 aa).

This sequence belongs to the fumigaclavine B O-acetyltransferase family. In terms of assembly, monomer.

It catalyses the reaction fumigaclavine B + acetyl-CoA = fumigaclavine A + CoA. Its pathway is alkaloid biosynthesis; ergot alkaloid biosynthesis. Its function is as follows. Fumigaclavine B O-acetyltransferase; part of the gene cluster that mediates the biosynthesis of isofumigaclavines, fungal ergot alkaloids. The tryptophan dimethylallyltransferase ifgA catalyzes the first step of ergot alkaloid biosynthesis by condensing dimethylallyl diphosphate (DMAP) and tryptophan to form 4-dimethylallyl-L-tryptophan. The second step is catalyzed by the methyltransferase ifgB that methylates 4-dimethylallyl-L-tryptophan in the presence of S-adenosyl-L-methionine, resulting in the formation of N-methyl-dimethylallyl-L-tryptophan. The catalase ifgD and the FAD-dependent oxidoreductase ifgC then transform N-methyl-dimethylallyl-L-tryptophan to chanoclavine-I which is further oxidized by ifgE in the presence of NAD(+), resulting in the formation of chanoclavine-I aldehyde. The chanoclavine-I aldehyde reductases ifgG and/or fgaOx3 reduce chanoclavine-I aldehyde to dihydrochanoclavine-I aldehyde that spontaneously dehydrates to form 6,8-dimethyl-6,7-didehydroergoline. The festuclavine dehydrogenases ifgF1 and/or ifgF2 then catalyze the reduction of 6,8-dimethyl-6,7-didehydroergoline to form festuclavine. Hydrolysis of festuclavine by a yet undetermined cytochrome P450 monooxygenase (called ifgH) then leads to the formation of isofumigaclavine B which is in turn acetylated by ifgI to isofumigaclavine A. Penicillium roqueforti has interestingly at least two sets of genes for the consumption of chanoclavine-I aldehyde on three different loci, the OYEs ifgG/fgaOx3 and the festuclavine synthase homologs ifgF1/ifgF2. The reason for the duplication of these genes is unclear, probably to ensure the conversion of chanoclavine-I aldehyde by differential gene expression under various environmental conditions. This Penicillium roqueforti (strain FM164) protein is Fumigaclavine B O-acetyltransferase ifgI.